The primary structure comprises 118 residues: Large ribosomal subunit protein uL18 (118 aa).

Belongs to the universal ribosomal protein uL18 family. Part of the 50S ribosomal subunit; part of the 5S rRNA/L5/L18/L25 subcomplex. Contacts the 5S and 23S rRNAs.

Its function is as follows. This is one of the proteins that bind and probably mediate the attachment of the 5S RNA into the large ribosomal subunit, where it forms part of the central protuberance. This chain is Large ribosomal subunit protein uL18, found in Dechloromonas aromatica (strain RCB).